The following is a 366-amino-acid chain: Endogenous Bornavirus-like nucleoprotein 1 (366 aa).

The span at 1–15 (MSRPRNNPQTSSPQD) shows a compositional bias: polar residues. The segment at 1-22 (MSRPRNNPQTSSPQDSTKDGSS) is disordered.

As to expression, expression detected by RT-PCR in a few cell lines, including OL, HEK293T and MOLT-4. Not observed in HeLa cells.

In terms of biological role, may act as an RNA-binding protein. Highly homologous to the bornavirus nucleocapsid N protein that binds viral RNA and oligomerizes. This is Endogenous Bornavirus-like nucleoprotein 1 (EBLN1) from Homo sapiens (Human).